A 168-amino-acid chain; its full sequence is Protein-export protein SecB (168 aa).

It belongs to the SecB family. As to quaternary structure, homotetramer, a dimer of dimers. One homotetramer interacts with 1 SecA dimer.

It is found in the cytoplasm. Its function is as follows. One of the proteins required for the normal export of preproteins out of the cell cytoplasm. It is a molecular chaperone that binds to a subset of precursor proteins, maintaining them in a translocation-competent state. It also specifically binds to its receptor SecA. This is Protein-export protein SecB from Saccharophagus degradans (strain 2-40 / ATCC 43961 / DSM 17024).